Here is a 273-residue protein sequence, read N- to C-terminus: ComE operon protein 4 (273 aa).

It belongs to the pyrroline-5-carboxylate reductase family.

Functionally, dispensable for transformability. Not known if it can act as a pyrroline-5-carboxylate reductase. The protein is ComE operon protein 4 (comER) of Bacillus subtilis (strain 168).